A 5537-amino-acid polypeptide reads, in one-letter code: Histone-lysine N-methyltransferase 2D (5537 aa).

The segment at methionine 1 to glycine 60 is disordered. Serine 27 carries the post-translational modification Phosphoserine. Polar residues predominate over residues valine 43 to aspartate 57. The C2HC pre-PHD-type 1; degenerate zinc finger occupies glycine 104 to valine 149. PHD-type zinc fingers lie at residues glutamine 170–serine 218, glutamate 226–cysteine 276, and cysteine 273–cysteine 323. The RING-type 1; atypical zinc finger occupies cysteine 229–lysine 274. Residues cysteine 276–arginine 321 form an RING-type 2; degenerate zinc finger. Disordered regions lie at residues valine 368–alanine 387, glutamine 393–alanine 416, glutamate 436–serine 1331, and valine 1340–threonine 1359. Residues proline 439–glutamate 668 are 15 X 5 AA repeats of S/P-P-P-E/P-E/A. Positions leucine 440–glutamate 473 are enriched in pro residues. A run of 3 repeats spans residues proline 442–glutamate 446, proline 460–alanine 464, and proline 469–glutamate 473. Over residues leucine 474–leucine 483 the composition is skewed to low complexity. The span at leucine 494–serine 509 shows a compositional bias: pro residues. Repeat copies occupy residues proline 496 to glutamate 500 and serine 504 to glutamate 508. Residues serine 510 to proline 519 show a composition bias toward low complexity. Pro residues-rich tracts occupy residues leucine 520–proline 547 and leucine 554–glutamate 595. Tandem repeats lie at residues serine 521–glutamate 525, serine 555–glutamate 559, serine 564–glutamate 568, serine 573–glutamate 577, and serine 582–glutamate 586. Positions alanine 596–proline 607 are enriched in low complexity. The segment covering leucine 608–glutamate 649 has biased composition (pro residues). 4 consecutive repeat copies span residues serine 609–glutamate 613, serine 618–glutamate 622, serine 627–glutamate 631, and serine 645–glutamate 649. The span at valine 650–leucine 662 shows a compositional bias: low complexity. Repeat 15 spans residues serine 663–glutamate 667. The segment covering serine 663–glutamate 712 has biased composition (pro residues). Residues aspartate 713–leucine 725 show a composition bias toward low complexity. At serine 744 the chain carries Phosphoserine. Basic and acidic residues-rich tracts occupy residues proline 745 to histidine 760 and arginine 845 to glutamate 869. Composition is skewed to low complexity over residues proline 889–proline 903 and leucine 911–glutamine 928. A compositionally biased stretch (pro residues) spans leucine 929–serine 940. Positions proline 941–leucine 954 are enriched in low complexity. The span at glutamate 994 to proline 1008 shows a compositional bias: pro residues. Residues proline 1048–proline 1057 are compositionally biased toward low complexity. Positions alanine 1068 to glutamate 1080 are enriched in basic and acidic residues. Serine 1151 carries the phosphoserine modification. Threonine 1195 carries the post-translational modification Phosphothreonine. Residues glutamate 1207–alanine 1216 show a composition bias toward polar residues. The residue at position 1249 (serine 1249) is a Phosphoserine. Threonine 1267 is subject to Phosphothreonine. A Phosphoserine modification is found at serine 1270. Composition is skewed to basic residues over residues glycine 1289–glutamine 1302 and glycine 1310–leucine 1329. PHD-type zinc fingers lie at residues glutamine 1377–cysteine 1430, cysteine 1427–cysteine 1477, and leucine 1504–tyrosine 1559. An RING-type 3; atypical zinc finger spans residues cysteine 1507–glutamine 1557. Serine 1606 carries the post-translational modification Phosphoserine. Disordered stretches follow at residues lysine 1610–methionine 1767, glycine 1793–lysine 1889, glutamate 1904–serine 2002, and proline 2165–arginine 2683. The span at proline 1637–leucine 1666 shows a compositional bias: basic and acidic residues. A Phosphoserine modification is found at serine 1671. Positions glutamate 1675–lysine 1685 are enriched in basic and acidic residues. Composition is skewed to basic residues over residues arginine 1702–lysine 1712 and lysine 1753–serine 1762. 2 stretches are compositionally biased toward basic and acidic residues: residues alanine 1806 to aspartate 1825 and glutamate 1832 to alanine 1841. Phosphoserine occurs at positions 1820 and 1834. A phosphothreonine mark is found at threonine 1843 and threonine 1865. Over residues aspartate 1874–lysine 1889 the composition is skewed to basic and acidic residues. Residues threonine 1979–glutamate 1990 are compositionally biased toward low complexity. Over residues proline 2190–proline 2209 the composition is skewed to pro residues. Serine 2239 carries the phosphoserine modification. Position 2240 is a phosphothreonine (threonine 2240). N6-acetyllysine is present on lysine 2246. Phosphoserine occurs at positions 2260 and 2274. The segment covering glutamate 2280 to leucine 2292 has biased composition (basic and acidic residues). Phosphoserine occurs at positions 2309, 2311, and 2342. 2 stretches are compositionally biased toward pro residues: residues glutamine 2350–histidine 2365 and alanine 2379–glutamate 2393. Composition is skewed to low complexity over residues serine 2409 to serine 2431 and phenylalanine 2494 to glutamate 2505. Arginine 2535 carries the asymmetric dimethylarginine modification. A compositionally biased stretch (pro residues) spans leucine 2547–histidine 2560. Residues lysine 2574–threonine 2584 show a composition bias toward polar residues. The segment covering proline 2589–proline 2609 has biased composition (low complexity). Pro residues predominate over residues leucine 2610 to proline 2621. Phosphoserine is present on serine 2640. The stretch at methionine 2669–alanine 2707 forms a coiled coil. The LXXLL motif 1 motif lies at leucine 2686–leucine 2690. 2 disordered regions span residues arginine 2697 to glutamine 2814 and alanine 2835 to aspartate 2996. Positions alanine 2707 to alanine 2722 are enriched in low complexity. 2 stretches are compositionally biased toward polar residues: residues serine 2733–serine 2746 and proline 2781–glutamine 2790. Arginine 2836 carries the post-translational modification Asymmetric dimethylarginine. Residues proline 2931–proline 2940 are compositionally biased toward pro residues. Residues leucine 3038–leucine 3042 carry the LXXLL motif 2 motif. The disordered stretch occupies residues glutamate 3078–arginine 3110. At lysine 3079 the chain carries N6-acetyllysine. Serine 3130 bears the Phosphoserine mark. Disordered regions lie at residues alanine 3147–leucine 3209 and lysine 3263–leucine 3339. A Phosphothreonine modification is found at threonine 3197. Low complexity-rich tracts occupy residues proline 3198 to leucine 3209, lysine 3263 to proline 3289, and glycine 3301 to alanine 3320. At serine 3199 the chain carries Phosphoserine. Positions isoleucine 3249 to glutamine 3282 form a coiled coil. Residues leucine 3325–proline 3334 are compositionally biased toward pro residues. At lysine 3433 the chain carries N6-acetyllysine. Disordered stretches follow at residues leucine 3462–glutamine 3499 and arginine 3596–leucine 3673. The stretch at glutamate 3562–serine 3614 forms a coiled coil. 2 stretches are compositionally biased toward low complexity: residues glutamine 3599 to glutamine 3612 and leucine 3631 to proline 3643. The stretch at arginine 3714–glutamine 3750 forms a coiled coil. An Asymmetric dimethylarginine modification is found at arginine 3727. The disordered stretch occupies residues glutamine 3758–leucine 3802. A coiled-coil region spans residues leucine 3897 to methionine 3975. Positions leucine 3984–methionine 4191 are disordered. The span at proline 4012 to glycine 4023 shows a compositional bias: low complexity. The segment covering lysine 4024–glutamine 4045 has biased composition (polar residues). Positions serine 4073 to leucine 4108 are enriched in low complexity. Positions alanine 4111–glycine 4120 are enriched in gly residues. Polar residues predominate over residues proline 4137 to glycine 4154. Arginine 4198 carries the asymmetric dimethylarginine modification. Position 4215 is a phosphoserine (serine 4215). The LXXLL motif 3 signature appears at leucine 4222–leucine 4226. 2 disordered regions span residues glutamine 4233–histidine 4398 and alanine 4410–alanine 4452. Polar residues predominate over residues valine 4237 to serine 4251. Positions proline 4252 to arginine 4282 are enriched in low complexity. The LXXLL motif 4 signature appears at leucine 4253 to leucine 4257. Residues proline 4283–proline 4293 are compositionally biased toward pro residues. Low complexity-rich tracts occupy residues glycine 4294–valine 4305 and proline 4320–proline 4331. The segment covering proline 4338 to arginine 4357 has biased composition (pro residues). Serine 4359 carries the post-translational modification Phosphoserine. The LXXLL motif 5 motif lies at leucine 4463–leucine 4467. N6-acetyllysine is present on lysine 4465. 2 disordered regions span residues glutamine 4503–glycine 4544 and lysine 4613–serine 4727. Pro residues predominate over residues proline 4619 to serine 4633. The segment covering leucine 4648–serine 4673 has biased composition (basic and acidic residues). Serine 4738 carries the phosphoserine modification. A Glycyl lysine isopeptide (Lys-Gly) (interchain with G-Cter in SUMO2) cross-link involves residue lysine 4756. Lysine 4776 is modified (N6-acetyllysine). Phosphoserine occurs at positions 4822 and 4849. Residues serine 4822 to leucine 4857 form a disordered region. A compositionally biased stretch (basic and acidic residues) spans threonine 4828–serine 4849. Lysine 4880 is covalently cross-linked (Glycyl lysine isopeptide (Lys-Gly) (interchain with G-Cter in SUMO2)). A disordered region spans residues glutamine 4905–lysine 4980. Positions alanine 4908–glutamate 4931 are enriched in pro residues. The segment covering proline 4932–leucine 4941 has biased composition (low complexity). The segment covering arginine 4966–proline 4976 has biased composition (basic and acidic residues). The LXXLL motif 6 motif lies at leucine 4990 to leucine 4994. The segment at methionine 5029–valine 5069 adopts a C2HC pre-PHD-type 2 zinc-finger fold. A PHD-type 7 zinc finger spans residues threonine 5090 to lysine 5137. The FYR N-terminal domain occupies leucine 5175 to asparagine 5235. Residues asparagine 5236–tyrosine 5321 enclose the FYR C-terminal domain. The WDR5 interaction motif (WIN) motif lies at glycine 5337–glutamate 5342. One can recognise an SET domain in the interval asparagine 5397–glutamine 5513. S-adenosyl-L-methionine is bound by residues tyrosine 5451 and asparagine 5474–histidine 5475. The Zn(2+) site is built by cysteine 5477, cysteine 5525, cysteine 5527, and cysteine 5532. Residues histidine 5521–asparagine 5537 form the Post-SET domain.

The protein belongs to the class V-like SAM-binding methyltransferase superfamily. Histone-lysine methyltransferase family. TRX/MLL subfamily. Component of the MLL2 complex (also named ASCOM complex), at least composed of catalytic subunit KMT2D/MLL2, ASH2L, RBBP5, WDR5, NCOA6, DPY30, KDM6A, PAXIP1/PTIP, PAGR1 and alpha- and beta-tubulin. Forms a core complex with the evolutionary conserved subcomplex WRAD composed of WDR5, RBBP5, ASH2L/ASH2 and DPY30 subunits; WRAD differentially stimulates the methyltransferase activity. Interacts with ESR1; interaction is direct. Interacts (via WIN motif) with WDR5. In terms of tissue distribution, expressed in most adult tissues, including a variety of hematoipoietic cells, with the exception of the liver.

Its subcellular location is the nucleus. The catalysed reaction is L-lysyl(4)-[histone H3] + S-adenosyl-L-methionine = N(6)-methyl-L-lysyl(4)-[histone H3] + S-adenosyl-L-homocysteine + H(+). Its function is as follows. Histone methyltransferase that catalyzes methyl group transfer from S-adenosyl-L-methionine to the epsilon-amino group of 'Lys-4' of histone H3 (H3K4). Part of chromatin remodeling machinery predominantly forms H3K4me1 methylation marks at active chromatin sites where transcription and DNA repair take place. Acts as a coactivator for estrogen receptor by being recruited by ESR1, thereby activating transcription. This chain is Histone-lysine N-methyltransferase 2D (KMT2D), found in Homo sapiens (Human).